Consider the following 175-residue polypeptide: Small ribosomal subunit protein uS5 (175 aa).

In terms of domain architecture, S5 DRBM spans Trp-19 to Ile-82.

This sequence belongs to the universal ribosomal protein uS5 family. Part of the 30S ribosomal subunit. Contacts proteins S4 and S8.

Its function is as follows. With S4 and S12 plays an important role in translational accuracy. Located at the back of the 30S subunit body where it stabilizes the conformation of the head with respect to the body. This is Small ribosomal subunit protein uS5 from Nostoc punctiforme (strain ATCC 29133 / PCC 73102).